Consider the following 304-residue polypeptide: Recombination-associated protein RdgC (304 aa).

The protein belongs to the RdgC family.

It localises to the cytoplasm. The protein resides in the nucleoid. Its function is as follows. May be involved in recombination. The sequence is that of Recombination-associated protein RdgC from Shewanella sp. (strain MR-4).